Reading from the N-terminus, the 167-residue chain is Interferon gamma (167 aa).

The signal sequence occupies residues 1–23; sequence MSYTSYILAFQLCLILGSYGCYC. Pyrrolidone carboxylic acid is present on glutamine 24. N-linked (GlcNAc...) asparagine glycans are attached at residues asparagine 41, asparagine 108, and asparagine 117.

Belongs to the type II (or gamma) interferon family. Homodimer. Interacts with IFNGR1 (via extracellular domain); this interaction promotes IFNGR1 dimerization. In terms of tissue distribution, released primarily from activated T lymphocytes.

It is found in the secreted. In terms of biological role, type II interferon produced by immune cells such as T-cells and NK cells that plays crucial roles in antimicrobial, antiviral, and antitumor responses by activating effector immune cells and enhancing antigen presentation. Primarily signals through the JAK-STAT pathway after interaction with its receptor IFNGR1 to affect gene regulation. Upon IFNG binding, IFNGR1 intracellular domain opens out to allow association of downstream signaling components JAK2, JAK1 and STAT1, leading to STAT1 activation, nuclear translocation and transcription of IFNG-regulated genes. Many of the induced genes are transcription factors such as IRF1 that are able to further drive regulation of a next wave of transcription. Plays a role in class I antigen presentation pathway by inducing a replacement of catalytic proteasome subunits with immunoproteasome subunits. In turn, increases the quantity, quality, and repertoire of peptides for class I MHC loading. Increases the efficiency of peptide generation also by inducing the expression of activator PA28 that associates with the proteasome and alters its proteolytic cleavage preference. Up-regulates as well MHC II complexes on the cell surface by promoting expression of several key molecules such as cathepsins B/CTSB, H/CTSH, and L/CTSL. Participates in the regulation of hematopoietic stem cells during development and under homeostatic conditions by affecting their development, quiescence, and differentiation. The sequence is that of Interferon gamma (IFNG) from Oryctolagus cuniculus (Rabbit).